A 410-amino-acid polypeptide reads, in one-letter code: Cytochrome P450 105A3 (410 aa).

Residue Cys-359 participates in heme binding.

This sequence belongs to the cytochrome P450 family. In terms of assembly, monomer. The cofactor is heme.

Its function is as follows. Catalyzes the hydroxylation of sodium ML-236B carboxylate to pravastatin. This is Cytochrome P450 105A3 (cyp105A3) from Streptomyces carbophilus.